The sequence spans 266 residues: uncharacterized protein (266 aa).

2 disordered regions span residues G50–D116 and E128–G224. Residues A78–L90 are compositionally biased toward pro residues. The span at G94–G108 shows a compositional bias: gly residues. Basic and acidic residues predominate over residues E129 to A161. A compositionally biased stretch (low complexity) spans P166 to A176.

This is an uncharacterized protein from Homo sapiens (Human).